The primary structure comprises 218 residues: uncharacterized protein (218 aa).

Residues 1 to 21 form the signal peptide; that stretch reads MKKFVYKYSFGALLLLSGLSS. Cys22 carries the N-palmitoyl cysteine lipid modification. Cys22 carries the S-diacylglycerol cysteine lipid modification.

Belongs to the chlamydial CPn_0875/CT_734/TC_0107 family.

The protein localises to the cell membrane. This is an uncharacterized protein from Chlamydia muridarum (strain MoPn / Nigg).